Consider the following 681-residue polypeptide: Leucine-rich repeat, immunoglobulin-like domain and transmembrane domain-containing protein 3 (681 aa).

The N-terminal stretch at M1–G19 is a signal peptide. N18 carries N-linked (GlcNAc...) asparagine glycosylation. The Lumenal segment spans residues T20 to S584. LRR repeat units follow at residues P56–Y79, L80–N103, L104–M128, P129–Y151, and L152–S175. One can recognise an Ig-like domain in the interval P254–T344. Residues C275 and C328 are joined by a disulfide bond. N296 carries N-linked (GlcNAc...) asparagine glycosylation. Disordered stretches follow at residues T350–S391 and T425–P464. Over residues T378–S391 the composition is skewed to polar residues. N-linked (GlcNAc...) asparagine glycosylation is found at N485 and N506. A helical transmembrane segment spans residues L585–L605. Residues Y606 to G681 lie on the Cytoplasmic side of the membrane.

Detected in the outer plexiform layer (OPL) of the retina, where it localizes to rod and cone ON-bipolar cells (at protein level). Also detected in bipolar cell bodies in the inner retinal layer (INL) (at protein level).

It localises to the cell projection. The protein resides in the dendrite. Its subcellular location is the perikaryon. It is found in the endoplasmic reticulum membrane. In terms of biological role, plays a role in the synapse formation and synaptic transmission between cone photoreceptor cells and retinal bipolar cells. Required for normal transmission of a light-evoked stimulus from the cone photoreceptor cells to the ON-bipolar cells and ON-ganglion cells in the inner retina. Required in retinal ON-bipolar cells for normal localization of the cation channel TRPM1 at dendrite tips. Seems to play a specific role in synaptic contacts made by ON-bipolar cells with cone photoreceptor pedicles. May also have a role in cone synapse formation. Might facilitate FGFR1 exit from the endoplasmic reticulum to the Golgi. Could be a regulator of the FGFRs. The chain is Leucine-rich repeat, immunoglobulin-like domain and transmembrane domain-containing protein 3 from Mus musculus (Mouse).